We begin with the raw amino-acid sequence, 160 residues long: MLVLLAATFFIYISRLTSTDALQLIQRGLRGKSETFDANATIVPEISESKRVIFGPKPTDLQHEEALVASYADPFKAALSIFKLLGANKFHQMTSSKTQLRYAFVKLRRWSQRPIAEPKRSWWQWRSKTGNKSRDDLAQKRGFRSWWSGRHKAKNAKRVA.

Positions 1 to 21 are cleaved as a signal peptide; that stretch reads MLVLLAATFFIYISRLTSTDA. The RxLR motif lies at 27–30; it reads RGLR. Asn39 and Asn131 each carry an N-linked (GlcNAc...) asparagine glycan.

This sequence belongs to the RxLR effector family.

The protein localises to the secreted. Its subcellular location is the host nucleus. It localises to the host cytoplasm. Its function is as follows. Secreted effector that completely suppresses the host cell death induced by cell death-inducing proteins. This chain is Secreted RxLR effector protein 83, found in Plasmopara viticola (Downy mildew of grapevine).